The following is a 333-amino-acid chain: Flotillin-like protein FloA (333 aa).

Transmembrane regions (helical) follow at residues 8 to 28 (LMPI…FTFI) and 30 to 50 (VGLW…TLVG).

Belongs to the flotillin-like FloA family. In terms of assembly, homooligomerizes.

The protein localises to the cell membrane. It localises to the membrane raft. Functionally, found in functional membrane microdomains (FMM) that may be equivalent to eukaryotic membrane rafts. FMMs are highly dynamic and increase in number as cells age. Flotillins are thought to be important factors in membrane fluidity. The chain is Flotillin-like protein FloA from Desulfitobacterium hafniense (strain DSM 10664 / DCB-2).